The following is a 238-amino-acid chain: Ribosomal RNA small subunit methyltransferase G (238 aa).

Residues Gly77, Phe82, 128–129 (AE), and Arg146 each bind S-adenosyl-L-methionine. Positions 216–238 (KKRQTPKKYPRKPGTPNKEPLLK) are disordered.

It belongs to the methyltransferase superfamily. RNA methyltransferase RsmG family.

The protein localises to the cytoplasm. Specifically methylates the N7 position of guanine in position 535 of 16S rRNA. This is Ribosomal RNA small subunit methyltransferase G from Macrococcus caseolyticus (strain JCSC5402) (Macrococcoides caseolyticum).